We begin with the raw amino-acid sequence, 138 residues long: Sporulation-specific cell division protein SsgB (138 aa).

The protein belongs to the SsgA family. Monomer. Interacts with SsgA. Interacts with FtsZ (via N-terminus).

It localises to the cell septum. Its function is as follows. Involved in sporulation-specific cell division. Required for early stages of sporulation. Important in the process of growth cessation prior to sporulation-specific cell division. Recruits cell division protein FtsZ to the future septum sites and tethers the contractile ring structure (Z ring) to the cytoplasmic membrane during sporulation. Stimulates polymerization and filament length of FtsZ in vitro. This Thermobifida fusca (strain YX) protein is Sporulation-specific cell division protein SsgB.